The sequence spans 702 residues: Cell adhesion molecule CEACAM5 (702 aa).

Positions 1 to 34 are cleaved as a signal peptide; sequence MESPSAPPHRWCIPWQRLLLTASLLTFWNPPTTA. Positions 35 to 144 constitute an Ig-like V-type domain; the sequence is KLTIESTPFN…TGQFRVYPEL (110 aa). N-linked (GlcNAc...) asparagine glycans are attached at residues Asn104, Asn115, Asn152, Asn182, Asn197, Asn204, Asn208, Asn246, Asn256, Asn274, Asn288, Asn292, Asn309, Asn330, Asn351, Asn360, Asn375, Asn432, Asn466, Asn480, Asn508, Asn529, Asn553, Asn560, Asn580, Asn612, Asn650, and Asn665. Ig-like C2-type domains lie at 145–232, 240–315, 323–410, 418–495, 501–588, and 593–675; these read PKPS…VILN, PTIS…TVTT, PKPF…VILN, PTIS…KTIT, PKPS…VTLD, and PDTP…ITVS. A disulfide bridge links Cys167 with Cys215. Cysteines 259 and 299 form a disulfide. The cysteines at positions 345 and 393 are disulfide-linked. Cys437 and Cys477 form a disulfide bridge. A disulfide bond links Cys523 and Cys571. Cys615 and Cys655 form a disulfide bridge. Ala685 carries the GPI-anchor amidated alanine lipid modification. The propeptide at 686–702 is removed in mature form; it reads GATVGIMIGVLVGVALI.

This sequence belongs to the immunoglobulin superfamily. CEA family. Homodimer. Post-translationally, complex immunoreactive glycoprotein with a MW of 180 kDa comprising 60% carbohydrate. In terms of tissue distribution, expressed in columnar epithelial and goblet cells of the colon (at protein level). Found in adenocarcinomas of endodermally derived digestive system epithelium and fetal colon.

The protein localises to the cell membrane. It localises to the apical cell membrane. Its subcellular location is the cell surface. Its function is as follows. Cell surface glycoprotein that plays a role in cell adhesion, intracellular signaling and tumor progression. Mediates homophilic and heterophilic cell adhesion with other carcinoembryonic antigen-related cell adhesion molecules, such as CEACAM6. Plays a role as an oncogene by promoting tumor progression; induces resistance to anoikis of colorectal carcinoma cells. In terms of biological role, (Microbial infection) Receptor for E.coli Dr adhesins. Binding of E.coli Dr adhesins leads to dissociation of the homodimer. In Homo sapiens (Human), this protein is Cell adhesion molecule CEACAM5.